The sequence spans 997 residues: Mannuronan C5-epimerase AlgE2 (997 aa).

PbH1 repeat units follow at residues 133-155, 157-179, 180-202, 204-226, 257-279, 280-315, and 320-359; these read DRDVTLERVEIREMSGYGFDPHE, TINLTIRDSVAHDNGLDGFVADF, QIGGVFENNVSYNNDRHGFNIVT, TNDFVLSNNVAYGNGGAGLVVQR, AHDVTLQNAEIYGNGLYGVRVYG, AEDVQILDNYIHDNSQNGSYAEILLQSYDDTAGVSG, and TTGTWIEGNTIVGSANSTYGIQERDDGTDYSSLYANSVSN. 10 Hemolysin-type calcium-binding repeats span residues 388 to 403, 406 to 422, 424 to 439, 557 to 573, 574 to 591, 696 to 711, 713 to 730, 828 to 839, 846 to 862, and 864 to 880; these read GTAGNDTLGGSDAHET, GLDGNDRLNGGAGNDIL, GGAGRDNLTGGAGADL, GHAGNDTLDGGAGDDIL, VGGAGRDSLTGGAGADVF, GSAGNDSLQGTAADEV, HGGGGRDTLAGGAGADVF, GGDGNDTLSGSS, GGVGNDSLDGGAGNDIL, and GGAGRDTLSGGSGSDIF.

Belongs to the D-mannuronate C5-epimerase family. Ca(2+) serves as cofactor.

The protein localises to the secreted. It catalyses the reaction [(1-&gt;4)-beta-D-mannuronosyl](n) = [alginate](n). It participates in glycan biosynthesis; alginate biosynthesis. Inhibited by zinc. Converts beta-D-mannuronic acid (M) to alpha-L-guluronic acid (G), producing a polymer with gel-forming capacity, required for the formation of the cyst coat. In Azotobacter vinelandii, this protein is Mannuronan C5-epimerase AlgE2.